The primary structure comprises 480 residues: MKLEPLFNLDPNTKVRTRFAPSPTGYLHVGGARTALYSWLYAKHNQGEFVLRIEDTDLERSTPEATAAILEGMEWLNLAWEHGPYFQTKRFERYNQVIDQMIEQGLAYRCYCTKERLEDLRHSQEQNKQKPRYDRYCLHQSEYPVDAPHVVRFKNPTEGTVVFDDAVRGRIEISNRELDDLIIRRTDGSPTYNFCVVVDDWDMGITHVVRGEDHINNTPRQINILKALGAPIPTYAHVSMINGDDGQKLSKRHGAVSVMQYRDEGYLPEALINYLVRLGWGHGDQEIFSREEMIALFDIHSVSKSASAFNTEKLQWLNQHYMRSLPVEQVATHLEWHMKKHGIDYSNGPNLAEIIPVLSERCKTLKELAISSRYFYQDVENYDEKAVAKNFKPEAIKPLAKLAEKLTALSDWTVENIHEVMSQTAQELDIGMGKVGMPFRLAVTGLGQSPSMDITAKLVGKDRTISRINNAIAFIHTQNV.

The 'HIGH' region signature appears at 21–31 (PSPTGYLHVGG). Residues Cys-110, Cys-112, Cys-137, and His-139 each contribute to the Zn(2+) site. A 'KMSKS' region motif is present at residues 248–252 (KLSKR). Lys-251 contacts ATP.

It belongs to the class-I aminoacyl-tRNA synthetase family. Glutamate--tRNA ligase type 1 subfamily. Monomer. The cofactor is Zn(2+).

The protein resides in the cytoplasm. The enzyme catalyses tRNA(Glu) + L-glutamate + ATP = L-glutamyl-tRNA(Glu) + AMP + diphosphate. Its function is as follows. Catalyzes the attachment of glutamate to tRNA(Glu) in a two-step reaction: glutamate is first activated by ATP to form Glu-AMP and then transferred to the acceptor end of tRNA(Glu). This chain is Glutamate--tRNA ligase, found in Histophilus somni (strain 129Pt) (Haemophilus somnus).